Here is a 142-residue protein sequence, read N- to C-terminus: Large ribosomal subunit protein uL11 (142 aa).

The protein belongs to the universal ribosomal protein uL11 family. As to quaternary structure, part of the ribosomal stalk of the 50S ribosomal subunit. Interacts with L10 and the large rRNA to form the base of the stalk. L10 forms an elongated spine to which L12 dimers bind in a sequential fashion forming a multimeric L10(L12)X complex. Post-translationally, one or more lysine residues are methylated.

Functionally, forms part of the ribosomal stalk which helps the ribosome interact with GTP-bound translation factors. The chain is Large ribosomal subunit protein uL11 from Mycoplasma capricolum subsp. capricolum (strain California kid / ATCC 27343 / NCTC 10154).